The primary structure comprises 465 residues: 23S rRNA (uracil(1939)-C(5))-methyltransferase RlmD (465 aa).

Residues Met-1 to Ala-22 are disordered. One can recognise a TRAM domain in the interval Pro-16 to Asp-80. Residues Cys-93, Cys-99, Cys-102, and Cys-181 each coordinate [4Fe-4S] cluster. S-adenosyl-L-methionine is bound by residues Gln-289, Phe-318, Asn-323, Glu-339, Asn-367, and Asp-388. Residue Cys-421 is the Nucleophile of the active site.

Belongs to the class I-like SAM-binding methyltransferase superfamily. RNA M5U methyltransferase family. RlmD subfamily.

The catalysed reaction is uridine(1939) in 23S rRNA + S-adenosyl-L-methionine = 5-methyluridine(1939) in 23S rRNA + S-adenosyl-L-homocysteine + H(+). In terms of biological role, catalyzes the formation of 5-methyl-uridine at position 1939 (m5U1939) in 23S rRNA. In Burkholderia ambifaria (strain ATCC BAA-244 / DSM 16087 / CCUG 44356 / LMG 19182 / AMMD) (Burkholderia cepacia (strain AMMD)), this protein is 23S rRNA (uracil(1939)-C(5))-methyltransferase RlmD.